We begin with the raw amino-acid sequence, 199 residues long: GTP cyclohydrolase-2 (199 aa).

52 to 56 (RMHSE) is a GTP binding site. Residues C57, C68, and C70 each coordinate Zn(2+). GTP contacts are provided by residues Q73, 94–96 (EGR), and T116. D128 (proton acceptor) is an active-site residue. The active-site Nucleophile is the R130. GTP-binding residues include T151 and K156.

This sequence belongs to the GTP cyclohydrolase II family. The cofactor is Zn(2+).

The catalysed reaction is GTP + 4 H2O = 2,5-diamino-6-hydroxy-4-(5-phosphoribosylamino)-pyrimidine + formate + 2 phosphate + 3 H(+). The protein operates within cofactor biosynthesis; riboflavin biosynthesis; 5-amino-6-(D-ribitylamino)uracil from GTP: step 1/4. In terms of biological role, catalyzes the conversion of GTP to 2,5-diamino-6-ribosylamino-4(3H)-pyrimidinone 5'-phosphate (DARP), formate and pyrophosphate. This chain is GTP cyclohydrolase-2, found in Aliivibrio salmonicida (strain LFI1238) (Vibrio salmonicida (strain LFI1238)).